A 564-amino-acid chain; its full sequence is Proline--tRNA ligase (564 aa).

This sequence belongs to the class-II aminoacyl-tRNA synthetase family. ProS type 1 subfamily. In terms of assembly, homodimer.

The protein resides in the cytoplasm. The enzyme catalyses tRNA(Pro) + L-proline + ATP = L-prolyl-tRNA(Pro) + AMP + diphosphate. Its function is as follows. Catalyzes the attachment of proline to tRNA(Pro) in a two-step reaction: proline is first activated by ATP to form Pro-AMP and then transferred to the acceptor end of tRNA(Pro). As ProRS can inadvertently accommodate and process non-cognate amino acids such as alanine and cysteine, to avoid such errors it has two additional distinct editing activities against alanine. One activity is designated as 'pretransfer' editing and involves the tRNA(Pro)-independent hydrolysis of activated Ala-AMP. The other activity is designated 'posttransfer' editing and involves deacylation of mischarged Ala-tRNA(Pro). The misacylated Cys-tRNA(Pro) is not edited by ProRS. The protein is Proline--tRNA ligase of Xanthomonas axonopodis pv. citri (strain 306).